A 185-amino-acid polypeptide reads, in one-letter code: Elongation factor P (185 aa).

It belongs to the elongation factor P family.

The protein localises to the cytoplasm. It participates in protein biosynthesis; polypeptide chain elongation. In terms of biological role, involved in peptide bond synthesis. Stimulates efficient translation and peptide-bond synthesis on native or reconstituted 70S ribosomes in vitro. Probably functions indirectly by altering the affinity of the ribosome for aminoacyl-tRNA, thus increasing their reactivity as acceptors for peptidyl transferase. The sequence is that of Elongation factor P from Staphylococcus saprophyticus subsp. saprophyticus (strain ATCC 15305 / DSM 20229 / NCIMB 8711 / NCTC 7292 / S-41).